A 492-amino-acid chain; its full sequence is MDPYKNRPSSAFNSPFWTTNSGAPIWNNNSSLTVGSRGPILLEDYHLVEKLANFDRERIPERVVHARGASAKGFFEVTHDISHLTCADFLRAPGVQTPLIVRFSTVIHERGSPETLRDPRGFAVKFYTREGNFDLVGNNFPVFFVRDGLKFPDMVHALKPNPKSHIQENWRILDFFSHHPESLHMFSFLFDDVGIPQDYRHMDGFGVNTYTLINKAGKAVYVKFHWKTTCGEKCLLDDEAIRVGGSNHSHATQDLYDSIAAGNYPEWKLYIQTLDPENEDRLDFDPLDVTKTWPEDVLPLQPVGRMVLNKNIDNFFAENEQLAFCPAIIVPGVYYSDDKLLQTRIFSYADTQRHRLGPNYLQLPANSPKCAHHNNHHDGFMNFMHRDEEVNYFPSRYDPVRHAERVPVPPRTLGGKREKCMIEKENNFKQPGERYRSWPSDRQERFVRRWVDALSDPRVTHEIRSIWISYWSQADRSLGQKIASHLNLKPSI.

Active-site residues include histidine 65 and asparagine 138. Position 348 (tyrosine 348) interacts with heme.

It belongs to the catalase family. As to quaternary structure, homotetramer. Requires heme as cofactor.

The protein localises to the peroxisome. The protein resides in the glyoxysome. It catalyses the reaction 2 H2O2 = O2 + 2 H2O. Occurs in almost all aerobically respiring organisms and serves to protect cells from the toxic effects of hydrogen peroxide. The chain is Catalase-3 (CAT3) from Glycine max (Soybean).